We begin with the raw amino-acid sequence, 287 residues long: ATP synthase gamma chain (287 aa).

The protein belongs to the ATPase gamma chain family. F-type ATPases have 2 components, CF(1) - the catalytic core - and CF(0) - the membrane proton channel. CF(1) has five subunits: alpha(3), beta(3), gamma(1), delta(1), epsilon(1). CF(0) has three main subunits: a, b and c. The F(1)F(0) complex interacts with SpoIIIJ and YqjG; YqgA is found in the same complex. Interacts with FloT.

It is found in the cell membrane. The protein localises to the membrane raft. In terms of biological role, produces ATP from ADP in the presence of a proton gradient across the membrane. The gamma chain is believed to be important in regulating ATPase activity and the flow of protons through the CF(0) complex. This is ATP synthase gamma chain from Bacillus subtilis (strain 168).